The chain runs to 541 residues: Chaperonin GroEL (541 aa).

ATP contacts are provided by residues 29 to 32 (TLGP), 86 to 90 (DGTTT), Gly413, 480 to 482 (NAA), and Asp496.

The protein belongs to the chaperonin (HSP60) family. As to quaternary structure, forms a cylinder of 14 subunits composed of two heptameric rings stacked back-to-back. Interacts with the co-chaperonin GroES.

It localises to the cytoplasm. It catalyses the reaction ATP + H2O + a folded polypeptide = ADP + phosphate + an unfolded polypeptide.. Functionally, together with its co-chaperonin GroES, plays an essential role in assisting protein folding. The GroEL-GroES system forms a nano-cage that allows encapsulation of the non-native substrate proteins and provides a physical environment optimized to promote and accelerate protein folding. The chain is Chaperonin GroEL from Gardnerella vaginalis.